Here is a 268-residue protein sequence, read N- to C-terminus: Undecaprenyl-diphosphatase (268 aa).

Transmembrane regions (helical) follow at residues 11 to 33 (FLGL…LLLI), 46 to 66 (FEVL…SAKL), 84 to 104 (LGVL…HGFI), 107 to 127 (VLFE…FILL), 144 to 164 (YPLP…IPGV), 185 to 205 (AEFS…YDLF), 213 to 233 (FNDG…GVFV), and 246 to 266 (FALF…ALII).

This sequence belongs to the UppP family.

It is found in the cell inner membrane. The catalysed reaction is di-trans,octa-cis-undecaprenyl diphosphate + H2O = di-trans,octa-cis-undecaprenyl phosphate + phosphate + H(+). In terms of biological role, catalyzes the dephosphorylation of undecaprenyl diphosphate (UPP). Confers resistance to bacitracin. This Brucella suis (strain ATCC 23445 / NCTC 10510) protein is Undecaprenyl-diphosphatase.